Consider the following 78-residue polypeptide: Small ribosomal subunit protein bS18 (78 aa).

It belongs to the bacterial ribosomal protein bS18 family. Part of the 30S ribosomal subunit. Forms a tight heterodimer with protein bS6.

Binds as a heterodimer with protein bS6 to the central domain of the 16S rRNA, where it helps stabilize the platform of the 30S subunit. This chain is Small ribosomal subunit protein bS18, found in Lactobacillus johnsonii (strain CNCM I-12250 / La1 / NCC 533).